We begin with the raw amino-acid sequence, 256 residues long: Deoxyribose-phosphate aldolase (256 aa).

Aspartate 102 (proton donor/acceptor) is an active-site residue. Residue lysine 165 is the Schiff-base intermediate with acetaldehyde of the active site. Lysine 197 (proton donor/acceptor) is an active-site residue.

The protein belongs to the DeoC/FbaB aldolase family. DeoC type 2 subfamily.

The protein localises to the cytoplasm. The catalysed reaction is 2-deoxy-D-ribose 5-phosphate = D-glyceraldehyde 3-phosphate + acetaldehyde. It participates in carbohydrate degradation; 2-deoxy-D-ribose 1-phosphate degradation; D-glyceraldehyde 3-phosphate and acetaldehyde from 2-deoxy-alpha-D-ribose 1-phosphate: step 2/2. Functionally, catalyzes a reversible aldol reaction between acetaldehyde and D-glyceraldehyde 3-phosphate to generate 2-deoxy-D-ribose 5-phosphate. This is Deoxyribose-phosphate aldolase from Shewanella sp. (strain MR-7).